The chain runs to 227 residues: Esterase OVCA2 (227 aa).

Active-site charge relay system residues include serine 120, aspartate 180, and histidine 207.

Belongs to the LovG family.

It carries out the reaction a carboxylic ester + H2O = an alcohol + a carboxylate + H(+). Its function is as follows. Exhibits ester hydrolase activity with a strong preference for long-chain alkyl ester substrates and high selectivity against a variety of short, branched, and substituted esters. Is able to hydrolyze ester bonds within a wide range of p-nitrophenyl derivatives (C2-C14) in vitro, with a strong preference toward substrates of &gt;8 carbons. The protein is Esterase OVCA2 (ovca2) of Danio rerio (Zebrafish).